An 859-amino-acid chain; its full sequence is Kinesin-like protein KIN-14T (859 aa).

A Kinesin motor domain is found at 91–411; it reads NIRVFCRVKP…LNFATRAKNI (321 aa). 168–175 contacts ATP; that stretch reads GQTGTGKT. The stretch at 422-463 forms a coiled coil; the sequence is QAKKEAVMMNLQKMMEKIEQEREMSLRKMRNLNETLEKLTGK. The segment at 511-530 is disordered; that stretch reads LSGADFSVTPNSSSFKSRRN. A compositionally biased stretch (polar residues) spans 518-530; the sequence is VTPNSSSFKSRRN.

The protein belongs to the TRAFAC class myosin-kinesin ATPase superfamily. Kinesin family. KIN-14 subfamily.

This Arabidopsis thaliana (Mouse-ear cress) protein is Kinesin-like protein KIN-14T.